The chain runs to 361 residues: L-threonine 3-dehydrogenase (361 aa).

Residue Cys-38 participates in Zn(2+) binding. Active-site charge relay system residues include Thr-40 and His-43. Zn(2+) contacts are provided by His-63, Glu-64, Cys-93, Cys-96, Cys-99, and Cys-107. NAD(+)-binding positions include Ile-175, Asp-195, Arg-200, 262–264, and 286–287; these read LGI and IY.

This sequence belongs to the zinc-containing alcohol dehydrogenase family. In terms of assembly, homotetramer. Requires Zn(2+) as cofactor.

It is found in the cytoplasm. It catalyses the reaction L-threonine + NAD(+) = (2S)-2-amino-3-oxobutanoate + NADH + H(+). The protein operates within amino-acid degradation; L-threonine degradation via oxydo-reductase pathway; glycine from L-threonine: step 1/2. Its function is as follows. Catalyzes the NAD(+)-dependent oxidation of L-threonine to 2-amino-3-ketobutyrate. The chain is L-threonine 3-dehydrogenase from Pectobacterium atrosepticum (strain SCRI 1043 / ATCC BAA-672) (Erwinia carotovora subsp. atroseptica).